Consider the following 660-residue polypeptide: MFSTAASPYDDLVIKATDENLASEDWALNMDVCDKVSSDGQNGARQAVTALQKRLSHRNPNVQIYALELANSLAQNCGKDLLGELSSRNWTSALDRLINDRATSTPVKKKALSFVKSWAKQIEETGDPNLGLMGELYDQLRAKNHVFDEPEPTPESAEEVRRRQEEEELQRVLELSKQDKGGRSLFTYQPSGSAGASSSSAANNNTSPSIPQSQAQPLAQDQAQSQAAPQVTGYAPQPQKIYSPQPLEPEPPRVDLNTATRVRAIYPFTGQEVGELDFERGDVIKVLDRGFKEWWRGACNGKIGIFPVTYVEALPEPTPKELQEKAQEEARVFASLGLVDQLLQTLKGIDPARGDKLDDHPEIEEMYQASVALQGQINTLIKKYSDQKAELEHMNANFIRAMGQYEELRNGPPLVQAQPFGYVPPQPQPLLQQQNSYSYQQYPQQPQQQPQPYAQAPYAQQAQPQLQPEQYAQQTPSPAAQSQASYTAQQQPYPAQVQQDPAAASPPPNQPFYHHGGSTTSVNRIPSAQTAVQPQPHGAPSFPPSSPPTRQVTEPGVAGLGAGDQQAWDQYYQQHGQQAPHSSQHPSQPQSQPQSQPQSQPQSQQGSYYPAHAQAQGYQAAYATVPDGRAYASPPLPGTQQGQGVEGVTAGMDRMSVHAP.

The VHS domain maps to A16–D148. A disordered region spans residues V146 to V254. A compositionally biased stretch (basic and acidic residues) spans E158 to G182. A UIM domain is found at Q164–R183. Residues P190–Q230 are compositionally biased toward low complexity. The 60-residue stretch at N257–E316 folds into the SH3 domain. The segment covering Y437–A503 has biased composition (low complexity). The disordered stretch occupies residues Y437–P660. Residues G517 to Q533 show a composition bias toward polar residues. Composition is skewed to low complexity over residues Q573–A623 and G638–G651.

The protein belongs to the STAM family. As to quaternary structure, component of the ESCRT-0 complex composed of HSE1 and VPS27.

It is found in the endosome membrane. Component of the ESCRT-0 complex which is the sorting receptor for ubiquitinated cargo proteins at the multivesicular body (MVB). The protein is Class E vacuolar protein-sorting machinery protein HSE1 (HSE1) of Cryptococcus neoformans var. neoformans serotype D (strain JEC21 / ATCC MYA-565) (Filobasidiella neoformans).